Consider the following 131-residue polypeptide: MRHYEIVFMVHPDQSEQVPGMIERYTGVITEANGTIHRLEDWGRRQLAYPIQDLHKAHYVLMNVEAPAETIEELETAFRFNDAVLRNMVMRTKVAVTEASPMARARDERDSRRGPAGERSYDEAHAEEIGE.

The disordered stretch occupies residues 98 to 131 (EASPMARARDERDSRRGPAGERSYDEAHAEEIGE). Over residues 104 to 131 (RARDERDSRRGPAGERSYDEAHAEEIGE) the composition is skewed to basic and acidic residues.

This sequence belongs to the bacterial ribosomal protein bS6 family.

In terms of biological role, binds together with bS18 to 16S ribosomal RNA. This is Small ribosomal subunit protein bS6 from Shewanella putrefaciens (strain CN-32 / ATCC BAA-453).